The following is a 281-amino-acid chain: Very long chain fatty acid elongase 7 (281 aa).

Ala2 is modified (N-acetylalanine). Topologically, residues 2 to 27 (AFSDLTSRTVRFYDNWIKDADPRVEN) are lumenal. Residues 28–48 (WLLMSSPLPQTIILGLYVYFV) form a helical membrane-spanning segment. At 49 to 72 (TSLGPKLMENRKPFELKKAMITYN) the chain is on the cytoplasmic side. The helical transmembrane segment at 73 to 93 (FFIVLFSVYMCYEFVMSGWGT) threads the bilayer. Topologically, residues 94-115 (GYSFRCDIVDYSQSPRAMRMVH) are lumenal. Cys99 and Cys231 are joined by a disulfide. A helical transmembrane segment spans residues 116 to 136 (TCWLYYFSKFIELFDTIFFVL). Lys124, Arg137, Lys139, Gln142, and His147 together coordinate 3-oxoeicosanoyl-CoA. Over 137-142 (RKKNSQ) the chain is Cytoplasmic. A helical transmembrane segment spans residues 143-162 (VTFLHVFHHTIMPWTWWFGV). Positions 147-151 (HVFHH) match the HxxHH motif motif. The Nucleophile role is filled by His150. Topologically, residues 163 to 176 (KFAAGGLGTFHALL) are lumenal. Residues 177–197 (NTAVHVVMYFYYGLCAMGPAY) traverse the membrane as a helical segment. 3-oxoeicosanoyl-CoA contacts are provided by Tyr187, Lys204, Thr208, and Gln211. Topologically, residues 198–206 (QKYLWWKKH) are cytoplasmic. A helical membrane pass occupies residues 207-227 (LTSLQLVQFVLVTVHIGQIFF). Residues 228–236 (MEDCNYQYP) lie on the Lumenal side of the membrane. Residues 237–257 (VFLYIIMSYGCIFLLLFLHFW) form a helical membrane-spanning segment. The Cytoplasmic portion of the chain corresponds to 258–281 (YRAYTKGQRLPKTMENGNCKSKHH). Arg266 contacts 3-oxoeicosanoyl-CoA. The Di-lysine motif signature appears at 277–281 (KSKHH).

This sequence belongs to the ELO family. ELOVL7 subfamily. As to quaternary structure, homodimer. Interacts with TECR.

It localises to the endoplasmic reticulum membrane. The enzyme catalyses a very-long-chain acyl-CoA + malonyl-CoA + H(+) = a very-long-chain 3-oxoacyl-CoA + CO2 + CoA. It carries out the reaction eicosanoyl-CoA + malonyl-CoA + H(+) = 3-oxodocosanoyl-CoA + CO2 + CoA. It catalyses the reaction (5Z,8Z,11Z,14Z)-eicosatetraenoyl-CoA + malonyl-CoA + H(+) = (7Z,10Z,13Z,16Z)-3-oxodocosatetraenoyl-CoA + CO2 + CoA. The catalysed reaction is (6Z,9Z,12Z)-octadecatrienoyl-CoA + malonyl-CoA + H(+) = (8Z,11Z,14Z)-3-oxoeicosatrienoyl-CoA + CO2 + CoA. The enzyme catalyses (9Z,12Z)-octadecadienoyl-CoA + malonyl-CoA + H(+) = (11Z,14Z)-3-oxoicosa-11,14-dienoyl-CoA + CO2 + CoA. It carries out the reaction (9Z)-octadecenoyl-CoA + malonyl-CoA + H(+) = 3-oxo-(11Z)-eicosenoyl-CoA + CO2 + CoA. It catalyses the reaction octadecanoyl-CoA + malonyl-CoA + H(+) = 3-oxoeicosanoyl-CoA + CO2 + CoA. The catalysed reaction is hexadecanoyl-CoA + malonyl-CoA + H(+) = 3-oxooctadecanoyl-CoA + CO2 + CoA. The enzyme catalyses (9Z,12Z,15Z)-octadecatrienoyl-CoA + malonyl-CoA + H(+) = (11Z,14Z,17Z)-3-oxoeicosatrienoyl-CoA + CO2 + CoA. Its pathway is lipid metabolism; fatty acid biosynthesis. Its function is as follows. Catalyzes the first and rate-limiting reaction of the four reactions that constitute the long-chain fatty acids elongation cycle. This endoplasmic reticulum-bound enzymatic process allows the addition of 2 carbons to the chain of long- and very long-chain fatty acids (VLCFAs) per cycle. Condensing enzyme with higher activity toward C18 acyl-CoAs, especially C18:3(n-3) acyl-CoAs and C18:3(n-6)-CoAs. Also active toward C20:4-, C18:0-, C18:1-, C18:2- and C16:0-CoAs, and weakly toward C20:0-CoA. Little or no activity toward C22:0-, C24:0-, or C26:0-CoAs. May participate in the production of saturated and polyunsaturated VLCFAs of different chain lengths that are involved in multiple biological processes as precursors of membrane lipids and lipid mediators. In Rattus norvegicus (Rat), this protein is Very long chain fatty acid elongase 7.